An 842-amino-acid chain; its full sequence is Translation initiation factor IF-2 (842 aa).

2 disordered regions span residues 1–41 and 112–219; these read MVAK…GFPD and RPNR…QTYQ. 2 stretches are compositionally biased toward basic and acidic residues: residues 32–41 and 153–165; these read PEDKKQGFPD and RRGE…RDFS. One can recognise a tr-type G domain in the interval 328 to 497; it reads ARPPVVTVMG…MLQAEVMELR (170 aa). Residues 337–344 are G1; it reads GHVDHGKT. 337 to 344 provides a ligand contact to GTP; that stretch reads GHVDHGKT. Residues 362–366 are G2; that stretch reads GITQH. The interval 383–386 is G3; the sequence is DTPG. GTP-binding positions include 383-387 and 437-440; these read DTPGH and NKID. The segment at 437-440 is G4; the sequence is NKID. The G5 stretch occupies residues 473-475; it reads SAL.

It belongs to the TRAFAC class translation factor GTPase superfamily. Classic translation factor GTPase family. IF-2 subfamily.

It localises to the cytoplasm. Functionally, one of the essential components for the initiation of protein synthesis. Protects formylmethionyl-tRNA from spontaneous hydrolysis and promotes its binding to the 30S ribosomal subunits. Also involved in the hydrolysis of GTP during the formation of the 70S ribosomal complex. In Treponema pallidum (strain Nichols), this protein is Translation initiation factor IF-2 (infB).